Reading from the N-terminus, the 523-residue chain is Ribonuclease Y (523 aa).

The chain crosses the membrane as a helical span at residues 28 to 48 (TYYIVATIIIAVIAVYVDYYI). Residues 227 to 312 (TVYVVNLPND…EMVEKAKKEV (86 aa)) enclose the KH domain. In terms of domain architecture, HD spans 353–446 (VLKHSIEVSY…VQAADAISAA (94 aa)).

Belongs to the RNase Y family.

The protein resides in the cell membrane. Its function is as follows. Endoribonuclease that initiates mRNA decay. This chain is Ribonuclease Y, found in Clostridium tetani (strain Massachusetts / E88).